The following is a 200-amino-acid chain: ATP-dependent Clp protease proteolytic subunit 3 (200 aa).

Catalysis depends on serine 101, which acts as the Nucleophile. The active site involves histidine 126.

This sequence belongs to the peptidase S14 family. As to quaternary structure, fourteen ClpP subunits assemble into 2 heptameric rings which stack back to back to give a disk-like structure with a central cavity, resembling the structure of eukaryotic proteasomes.

The protein localises to the cytoplasm. The catalysed reaction is Hydrolysis of proteins to small peptides in the presence of ATP and magnesium. alpha-casein is the usual test substrate. In the absence of ATP, only oligopeptides shorter than five residues are hydrolyzed (such as succinyl-Leu-Tyr-|-NHMec, and Leu-Tyr-Leu-|-Tyr-Trp, in which cleavage of the -Tyr-|-Leu- and -Tyr-|-Trp bonds also occurs).. Functionally, cleaves peptides in various proteins in a process that requires ATP hydrolysis. Has a chymotrypsin-like activity. Plays a major role in the degradation of misfolded proteins. The chain is ATP-dependent Clp protease proteolytic subunit 3 from Parasynechococcus marenigrum (strain WH8102).